The chain runs to 286 residues: 33 kDa chaperonin (286 aa).

2 disulfide bridges follow: Cys-225–Cys-227 and Cys-258–Cys-261.

This sequence belongs to the HSP33 family. Post-translationally, under oxidizing conditions two disulfide bonds are formed involving the reactive cysteines. Under reducing conditions zinc is bound to the reactive cysteines and the protein is inactive.

It localises to the cytoplasm. Its function is as follows. Redox regulated molecular chaperone. Protects both thermally unfolding and oxidatively damaged proteins from irreversible aggregation. Plays an important role in the bacterial defense system toward oxidative stress. In Shewanella putrefaciens (strain CN-32 / ATCC BAA-453), this protein is 33 kDa chaperonin.